The sequence spans 334 residues: UDP-N-acetylglucosamine 4,6-dehydratase (inverting) (334 aa).

Residues 13-16 (TGSF), 37-42 (SRDELK), 61-62 (DV), Ala81, Lys85, and 123-124 (LS) each bind NADP(+). Lys85 lines the substrate pocket. Residue Lys127 is part of the active site. Residues Tyr135 and Lys139 each coordinate NADP(+). Asn167 contacts substrate. NADP(+) is bound at residue 168 to 172 (VVGSR). Substrate is bound by residues Val175, Thr193, Arg252, and Glu255.

The protein belongs to the polysaccharide synthase family. Homohexamer. It depends on NADP(+) as a cofactor.

It catalyses the reaction UDP-N-acetyl-alpha-D-glucosamine = UDP-2-acetamido-2,6-dideoxy-beta-L-arabino-hex-4-ulose + H2O. In terms of biological role, catalyzes the first step in the biosynthesis of pseudaminic acid, a sialic-acid-like sugar that is used to modify flagellin. Has both C6 dehydratase and C5 epimerase activities that result in the production of both UDP-2-acetamido-2,6-dideoxy-beta-L-arabino-4-hexulose and UDP-2-acetamido-2,6-dideoxy-alpha-D-xylo-4-hexulose. The sequence is that of UDP-N-acetylglucosamine 4,6-dehydratase (inverting) (pseB) from Campylobacter jejuni subsp. jejuni serotype O:2 (strain ATCC 700819 / NCTC 11168).